A 453-amino-acid polypeptide reads, in one-letter code: Phosphoglucosamine mutase (453 aa).

The active-site Phosphoserine intermediate is the serine 110. Positions 110, 248, 250, and 252 each coordinate Mg(2+). Residue serine 110 is modified to Phosphoserine.

This sequence belongs to the phosphohexose mutase family. Requires Mg(2+) as cofactor. Post-translationally, activated by phosphorylation.

It catalyses the reaction alpha-D-glucosamine 1-phosphate = D-glucosamine 6-phosphate. Functionally, catalyzes the conversion of glucosamine-6-phosphate to glucosamine-1-phosphate. This Mycolicibacterium smegmatis (strain ATCC 700084 / mc(2)155) (Mycobacterium smegmatis) protein is Phosphoglucosamine mutase.